The chain runs to 366 residues: Chorismate synthase (366 aa).

NADP(+) contacts are provided by Arg48 and Arg54. FMN is bound by residues 125-127, 238-239, Gly278, 293-297, and Arg319; these read RSS, NA, and KPTSS.

Belongs to the chorismate synthase family. In terms of assembly, homotetramer. FMNH2 is required as a cofactor.

The enzyme catalyses 5-O-(1-carboxyvinyl)-3-phosphoshikimate = chorismate + phosphate. It participates in metabolic intermediate biosynthesis; chorismate biosynthesis; chorismate from D-erythrose 4-phosphate and phosphoenolpyruvate: step 7/7. Functionally, catalyzes the anti-1,4-elimination of the C-3 phosphate and the C-6 proR hydrogen from 5-enolpyruvylshikimate-3-phosphate (EPSP) to yield chorismate, which is the branch point compound that serves as the starting substrate for the three terminal pathways of aromatic amino acid biosynthesis. This reaction introduces a second double bond into the aromatic ring system. The chain is Chorismate synthase from Thiobacillus denitrificans (strain ATCC 25259 / T1).